The primary structure comprises 64 residues: Large ribosomal subunit protein bL35 (64 aa).

It belongs to the bacterial ribosomal protein bL35 family.

The chain is Large ribosomal subunit protein bL35 from Leifsonia xyli subsp. xyli (strain CTCB07).